Consider the following 452-residue polypeptide: MAIIIAAPASGTGKTTITLALLAYLKAHALRVRSFKVGPDYIDPMFHAAVTGQGCVNLDLFLTDEPFVRATYHHHCRGQQAAVIEGVMGLFDGRAGQGDFASTAHVARLLRLPVILVIDGSGAGFSVAATLYGFRRFDPRVRIAGVILNRVGSERHAQILSEAVRSQGLELLGTVYKDETIALPHRHLGLVPVEELSDFRRTQQQLAALAERSFDWQKLLPLVAIQPTAPAPARWEAEPLPPVRIAVARDRAFSFYYQDNLELLAALGAQLETFSPLAGEWPDCRGYLLGGGFPELCAGELSAKTRFWEGLRGAVARGVPLYAECGGLMVLGEALRTPEGRSHPMAGILEASCWMGKRTVLGYRVATALHSSCAVEAGRQLRGHLFHRSRMEPQPGAPLWQLDDDEQEGWVRGNLHASYLHLHWGTQAWAARRFVRRCLAVAFEGKSTPARF.

In terms of domain architecture, GATase cobBQ-type spans 244–429; sequence RIAVARDRAF…LHLHWGTQAW (186 aa). Cys-325 (nucleophile) is an active-site residue.

Belongs to the CobB/CbiA family. Requires Mg(2+) as cofactor.

The enzyme catalyses cob(II)yrinate + 2 L-glutamine + 2 ATP + 2 H2O = cob(II)yrinate a,c diamide + 2 L-glutamate + 2 ADP + 2 phosphate + 2 H(+). It functions in the pathway cofactor biosynthesis; adenosylcobalamin biosynthesis; cob(II)yrinate a,c-diamide from sirohydrochlorin (anaerobic route): step 10/10. Functionally, catalyzes the ATP-dependent amidation of the two carboxylate groups at positions a and c of cobyrinate, using either L-glutamine or ammonia as the nitrogen source. The protein is Cobyrinate a,c-diamide synthase of Gloeobacter violaceus (strain ATCC 29082 / PCC 7421).